The sequence spans 188 residues: Putative pre-16S rRNA nuclease (188 aa).

The interval 156-188 (LRQGDAAPGGSDDERDEDGDTDGEDGGGDGGGE) is disordered. A compositionally biased stretch (acidic residues) spans 166–188 (SDDERDEDGDTDGEDGGGDGGGE).

The protein belongs to the YqgF nuclease family.

It is found in the cytoplasm. Functionally, could be a nuclease involved in processing of the 5'-end of pre-16S rRNA. In Rhodospirillum centenum (strain ATCC 51521 / SW), this protein is Putative pre-16S rRNA nuclease.